A 250-amino-acid chain; its full sequence is Dimethyl sulfide dehydrogenase assembly chaperone protein (250 aa).

A disordered region spans residues 231–250 (SAEARSDSAPDAAAHQNLWG).

It belongs to the type II DMSO reductase enzyme chaperone family.

The protein localises to the cytoplasm. In terms of biological role, may function as a system-specific chaperone protein essential for the assembly of an active dimethyl sulfide dehydrogenase DdhABC. This is Dimethyl sulfide dehydrogenase assembly chaperone protein (ddhD) from Rhodovulum sulfidophilum (Rhodobacter sulfidophilus).